The primary structure comprises 117 residues: Immunoglobulin heavy variable 1-84 (117 aa).

A signal peptide spans 1-19 (MGWSWIFLFLLSGTAGVHC). Positions 20-49 (QIQLQQSGPELVKPGASVKISCKASGYTFT) are framework-1. The 87-residue stretch at 31 to 117 (VKPGASVKIS…EDSAVYFCAR (87 aa)) folds into the Ig-like domain. Residues Cys41 and Cys115 are joined by a disulfide bond. A complementarity-determining-1 region spans residues 50–54 (DYYIN). Residues 55 to 68 (WVKQRPGQGLEWIG) form a framework-2 region. Residues 69–85 (WIYPGSGNTKYNEKFKG) are complementarity-determining-2. The framework-3 stretch occupies residues 86-117 (KATLTVDTSSSTAYMQLSSLTSEDSAVYFCAR).

In Mus musculus (Mouse), this protein is Immunoglobulin heavy variable 1-84.